A 146-amino-acid polypeptide reads, in one-letter code: Snake venom vascular endothelial growth factor toxin (146 aa).

Positions 1-24 are cleaved as a signal peptide; the sequence is MAVYLLAVAILFCIQGWPLGTVQG. Pyrrolidone carboxylic acid is present on Gln25. Intrachain disulfides connect Cys38/Cys80, Cys69/Cys115, and Cys73/Cys117. Positions 118-146 are disordered; that stretch reads RPRSASGVNSRKHKRNPEEGEPRAKFPFV. Basic and acidic residues predominate over residues 133–146; the sequence is NPEEGEPRAKFPFV.

It belongs to the PDGF/VEGF growth factor family. Snake venom VEGF subfamily. Homodimer; disulfide-linked. Interacts with VEGF receptor-1 (FLT1) with a high affinity, whereas it binds to VEGF receptor-2 (KDR) with a low affinity. Does not bind VEGF receptor-3 (FLT4). In terms of tissue distribution, expressed by the venom gland.

Its subcellular location is the secreted. Functionally, snake venom VEGFs that may contribute to venom dispersion and prey subjugation by inducing vascular permeability and hypotension. This protein induces an increase in capillary permeability after intradermal injection, as well as a drastic hypotensive effect after intravenous injection. The hypotension is mediated by nitric oxide (NO), which is produced by VEGF-activated endothelium NO synthase. Also induces angiogenesis in vitro. Like other crotalid VEGFs, this protein interacts with VEGF receptor-1 (FLT1) with a high affinity, whereas it binds to VEGF receptor-2 (KDR) with a low affinity. The protein is Snake venom vascular endothelial growth factor toxin of Bothrops jararaca (Jararaca).